Reading from the N-terminus, the 545-residue chain is CTP synthase (545 aa).

The segment at 1–266 (MTTRYIFVTG…DELVVKRFGI (266 aa)) is amidoligase domain. CTP is bound at residue serine 14. Serine 14 contributes to the UTP binding site. ATP-binding positions include 15-20 (SLGKGI) and aspartate 72. The Mg(2+) site is built by aspartate 72 and glutamate 140. CTP contacts are provided by residues 147–149 (DIE), 187–192 (KTKPTQ), and lysine 223. Residues 187–192 (KTKPTQ) and lysine 223 each bind UTP. 239-241 (KDV) provides a ligand contact to ATP. Residues 291 to 542 (TIGMVGKYIE…VAAATAYQKR (252 aa)) form the Glutamine amidotransferase type-1 domain. L-glutamine is bound at residue glycine 352. Cysteine 379 serves as the catalytic Nucleophile; for glutamine hydrolysis. L-glutamine contacts are provided by residues 380 to 383 (LGLQ), glutamate 403, and arginine 470. Residues histidine 515 and glutamate 517 contribute to the active site.

It belongs to the CTP synthase family. Homotetramer.

It catalyses the reaction UTP + L-glutamine + ATP + H2O = CTP + L-glutamate + ADP + phosphate + 2 H(+). The enzyme catalyses L-glutamine + H2O = L-glutamate + NH4(+). The catalysed reaction is UTP + NH4(+) + ATP = CTP + ADP + phosphate + 2 H(+). The protein operates within pyrimidine metabolism; CTP biosynthesis via de novo pathway; CTP from UDP: step 2/2. Allosterically activated by GTP, when glutamine is the substrate; GTP has no effect on the reaction when ammonia is the substrate. The allosteric effector GTP functions by stabilizing the protein conformation that binds the tetrahedral intermediate(s) formed during glutamine hydrolysis. Inhibited by the product CTP, via allosteric rather than competitive inhibition. Catalyzes the ATP-dependent amination of UTP to CTP with either L-glutamine or ammonia as the source of nitrogen. Regulates intracellular CTP levels through interactions with the four ribonucleotide triphosphates. The protein is CTP synthase of Shewanella sediminis (strain HAW-EB3).